A 116-amino-acid polypeptide reads, in one-letter code: Holo-[acyl-carrier-protein] synthase (116 aa).

Asp-5 and Glu-50 together coordinate Mg(2+).

It belongs to the P-Pant transferase superfamily. AcpS family. Mg(2+) is required as a cofactor.

Its subcellular location is the cytoplasm. The enzyme catalyses apo-[ACP] + CoA = holo-[ACP] + adenosine 3',5'-bisphosphate + H(+). Transfers the 4'-phosphopantetheine moiety from coenzyme A to a Ser of acyl-carrier-protein. In Nitratiruptor sp. (strain SB155-2), this protein is Holo-[acyl-carrier-protein] synthase.